A 35-amino-acid chain; its full sequence is Surfactant protein C (35 aa).

S-palmitoyl cysteine attachment occurs at residues cysteine 5 and cysteine 6.

It is found in the secreted. The protein localises to the extracellular space. Its subcellular location is the surface film. Functionally, pulmonary surfactant associated proteins promote alveolar stability by lowering the surface tension at the air-liquid interface in the peripheral air spaces. The sequence is that of Surfactant protein C (SFTPC) from Sus scrofa (Pig).